Reading from the N-terminus, the 76-residue chain is UPF0248 protein MMP0286 (76 aa).

It belongs to the UPF0248 family.

This chain is UPF0248 protein MMP0286, found in Methanococcus maripaludis (strain DSM 14266 / JCM 13030 / NBRC 101832 / S2 / LL).